The sequence spans 42 residues: Potassium channel toxin gamma-KTx 3.4 (42 aa).

4 cysteine pairs are disulfide-bonded: Cys5–Cys23, Cys11–Cys34, Cys20–Cys39, and Cys24–Cys41.

This sequence belongs to the ergtoxin family. Gamma-KTx 3 subfamily. In terms of tissue distribution, expressed by the venom gland.

It is found in the secreted. Its function is as follows. Blocks Kv11/ERG potassium channels. In Centruroides gracilis (Slenderbrown scorpion), this protein is Potassium channel toxin gamma-KTx 3.4.